A 498-amino-acid polypeptide reads, in one-letter code: Cobyric acid synthase (498 aa).

Positions 257-447 (DLEIAVLRLP…LHGLLDNGPW (191 aa)) constitute a GATase cobBQ-type domain. Catalysis depends on Cys-338, which acts as the Nucleophile. The active site involves His-439.

Belongs to the CobB/CobQ family. CobQ subfamily.

Its pathway is cofactor biosynthesis; adenosylcobalamin biosynthesis. Its function is as follows. Catalyzes amidations at positions B, D, E, and G on adenosylcobyrinic A,C-diamide. NH(2) groups are provided by glutamine, and one molecule of ATP is hydrogenolyzed for each amidation. This Synechococcus sp. (strain CC9605) protein is Cobyric acid synthase.